We begin with the raw amino-acid sequence, 184 residues long: ATP synthase subunit b, chloroplastic (184 aa).

The helical transmembrane segment at 27–49 (LATNLINLSVVLGVLIFFGKGVL) threads the bilayer.

Belongs to the ATPase B chain family. In terms of assembly, F-type ATPases have 2 components, F(1) - the catalytic core - and F(0) - the membrane proton channel. F(1) has five subunits: alpha(3), beta(3), gamma(1), delta(1), epsilon(1). F(0) has four main subunits: a(1), b(1), b'(1) and c(10-14). The alpha and beta chains form an alternating ring which encloses part of the gamma chain. F(1) is attached to F(0) by a central stalk formed by the gamma and epsilon chains, while a peripheral stalk is formed by the delta, b and b' chains.

It localises to the plastid. It is found in the chloroplast thylakoid membrane. In terms of biological role, f(1)F(0) ATP synthase produces ATP from ADP in the presence of a proton or sodium gradient. F-type ATPases consist of two structural domains, F(1) containing the extramembraneous catalytic core and F(0) containing the membrane proton channel, linked together by a central stalk and a peripheral stalk. During catalysis, ATP synthesis in the catalytic domain of F(1) is coupled via a rotary mechanism of the central stalk subunits to proton translocation. Its function is as follows. Component of the F(0) channel, it forms part of the peripheral stalk, linking F(1) to F(0). The polypeptide is ATP synthase subunit b, chloroplastic (Nymphaea alba (White water-lily)).